The following is a 119-amino-acid chain: Large ribosomal subunit protein P3z (119 aa).

Over residues 79–90 the composition is skewed to gly residues; the sequence is AGGAASSGGGAG. Residues 79-119 are disordered; that stretch reads AGGAASSGGGAGEAAAAPKEDEKKKEESEEEEGDFGFDLFG. Residues 96–105 show a composition bias toward basic and acidic residues; that stretch reads PKEDEKKKEE.

The protein belongs to the eukaryotic ribosomal protein P1/P2 family. Phosphorylated.

Functionally, plays an important role in the elongation step of protein synthesis. This Arabidopsis thaliana (Mouse-ear cress) protein is Large ribosomal subunit protein P3z (RPP3A).